The chain runs to 477 residues: Bifunctional protein HldE (477 aa).

The ribokinase stretch occupies residues 1 to 318 (MKVTLPEFER…ENAVRGRADT (318 aa)). An N6-acetyllysine modification is found at K179. 195–198 (NLSE) contacts ATP. The active site involves D264. A cytidylyltransferase region spans residues 344–477 (MTNGVFDILH…IKKIQQDKKG (134 aa)).

It in the N-terminal section; belongs to the carbohydrate kinase PfkB family. This sequence in the C-terminal section; belongs to the cytidylyltransferase family. Homodimer.

The catalysed reaction is D-glycero-beta-D-manno-heptose 7-phosphate + ATP = D-glycero-beta-D-manno-heptose 1,7-bisphosphate + ADP + H(+). It catalyses the reaction D-glycero-beta-D-manno-heptose 1-phosphate + ATP + H(+) = ADP-D-glycero-beta-D-manno-heptose + diphosphate. The protein operates within nucleotide-sugar biosynthesis; ADP-L-glycero-beta-D-manno-heptose biosynthesis; ADP-L-glycero-beta-D-manno-heptose from D-glycero-beta-D-manno-heptose 7-phosphate: step 1/4. It functions in the pathway nucleotide-sugar biosynthesis; ADP-L-glycero-beta-D-manno-heptose biosynthesis; ADP-L-glycero-beta-D-manno-heptose from D-glycero-beta-D-manno-heptose 7-phosphate: step 3/4. Catalyzes the phosphorylation of D-glycero-D-manno-heptose 7-phosphate at the C-1 position to selectively form D-glycero-beta-D-manno-heptose-1,7-bisphosphate. Its function is as follows. Catalyzes the ADP transfer from ATP to D-glycero-beta-D-manno-heptose 1-phosphate, yielding ADP-D-glycero-beta-D-manno-heptose. In Shigella flexneri serotype 5b (strain 8401), this protein is Bifunctional protein HldE.